The primary structure comprises 161 residues: Urocortin-3 (161 aa).

The N-terminal stretch at 1 to 21 (MLMPVHFLLLLLLLLGGPRTG) is a signal peptide. Residues 22-118 (LPHKFYKAKP…QDTAKSPHRT (97 aa)) constitute a propeptide that is removed on maturation. The segment at 64–118 (SRDASSGEEEEGKEKKTFPISGARGGARGTRYRYVSQAQPRGKPRQDTAKSPHRT) is disordered. I157 is modified (isoleucine amide).

It belongs to the sauvagine/corticotropin-releasing factor/urotensin I family. In terms of assembly, binds with high affinity to CRF receptors 2-alpha and 2-beta.

Its subcellular location is the secreted. In terms of biological role, suppresses food intake, delays gastric emptying and decreases heat-induced edema. Might represent an endogenous ligand for maintaining homeostasis after stress. The polypeptide is Urocortin-3 (UCN3) (Homo sapiens (Human)).